The sequence spans 571 residues: Urease subunit alpha (571 aa).

In terms of domain architecture, Urease spans 133–571; the sequence is GGIDTHVHFI…LPLTQRYFLF (439 aa). Positions 138, 140, and 221 each coordinate Ni(2+). Lys221 is modified (N6-carboxylysine). Position 223 (His223) interacts with substrate. Ni(2+)-binding residues include His250 and His276. His324 functions as the Proton donor in the catalytic mechanism. Asp364 provides a ligand contact to Ni(2+).

The protein belongs to the metallo-dependent hydrolases superfamily. Urease alpha subunit family. In terms of assembly, heterotrimer of UreA (gamma), UreB (beta) and UreC (alpha) subunits. Three heterotrimers associate to form the active enzyme. Ni cation is required as a cofactor. In terms of processing, carboxylation allows a single lysine to coordinate two nickel ions.

The protein localises to the cytoplasm. The enzyme catalyses urea + 2 H2O + H(+) = hydrogencarbonate + 2 NH4(+). Its pathway is nitrogen metabolism; urea degradation; CO(2) and NH(3) from urea (urease route): step 1/1. In Staphylococcus saprophyticus subsp. saprophyticus (strain ATCC 15305 / DSM 20229 / NCIMB 8711 / NCTC 7292 / S-41), this protein is Urease subunit alpha.